A 118-amino-acid chain; its full sequence is UPF0134 protein MPN_287 (118 aa).

The protein belongs to the UPF0134 family.

This is UPF0134 protein MPN_287 from Mycoplasma pneumoniae (strain ATCC 29342 / M129 / Subtype 1) (Mycoplasmoides pneumoniae).